The chain runs to 4568 residues: Dynein heavy chain, cytoplasmic (4568 aa).

The tract at residues 1–1826 (MDSGNESSII…VVKMANSQFF (1826 aa)) is stem. 5 coiled-coil regions span residues 587 to 652 (QTRL…VLGK), 814 to 844 (KLAE…NVLK), 1241 to 1274 (QEAL…LDLS), 1324 to 1340 (RKIR…LKQL), and 1559 to 1591 (VNMQ…RERS). 4 AAA regions span residues 1827-2049 (YGFE…VLVS), 2118-2394 (QQLS…PTPQ), 2498-2747 (EIES…WVRG), and 2842-3111 (GFYE…GHRV). ATP-binding positions include 1865-1872 (GPAGTGKT), 2163-2170 (GSSGSGKT), 2537-2544 (GPPGSGKT), and 2880-2887 (GTAGAGKT). Coiled coils occupy residues 3132 to 3229 (EKRS…AQVE), 3339 to 3432 (ARAQ…RDRW), and 3707 to 3739 (NSVI…EVDA). Residues 3132 to 3432 (EKRSDLEEEK…SSLRSERDRW (301 aa)) are stalk. AAA regions lie at residues 3496–3725 (LSTV…EVAQ) and 3954–4169 (AHRV…TLDA). A coiled-coil region spans residues 4359–4386 (QLLKDIRRDLNEISAVCRAEKKQNNETR).

The protein belongs to the dynein heavy chain family. Consists of at least two heavy chains and a number of intermediate and light chains.

Its subcellular location is the cytoplasm. The protein resides in the cytoskeleton. Its function is as follows. Cytoplasmic dynein acts as a motor for the intracellular retrograde motility of vesicles and organelles along microtubules. Dynein has ATPase activity; the force-producing power stroke is thought to occur on release of ADP. May play a role in nuclear migration in hypodermal precursor cells. May be involved in the transport of synaptic vesicle components towards the axon of the DA motor neuron. This function may involve the regulation of dynein by pct-1 and/or cdk-5. Involved in the formation of synapses in the dorsal region during synaptic remodeling of DD motor neurons. Required for anterograde trafficking of dense-core vesicles in the DB motor neuron dendrites. Required for the formation of dendritic branches of PVD sensory neurons. May also play a role in GABAergic synaptic vesicle localization in the ventral nerve cord. May play a role in the pairing of homologous chromosomes during meiosis. This is Dynein heavy chain, cytoplasmic from Caenorhabditis elegans.